Here is a 399-residue protein sequence, read N- to C-terminus: Fructose-bisphosphate aldolase 1, chloroplastic (399 aa).

Residues 1–48 constitute a chloroplast transit peptide; that stretch reads MASSTATMLKASPVKSDWVKGQSLLLRQPSSVSAIRSHVAPSALTVRA. Position 96 (arginine 96) interacts with substrate. Phosphoserine is present on serine 158. Lysine 186 serves as a coordination point for substrate. The residue at position 216 (serine 216) is a Phosphoserine. The active-site Proton acceptor is glutamate 226. Lysine 268 serves as the catalytic Schiff-base intermediate with dihydroxyacetone-P. Residue 310-312 participates in substrate binding; that stretch reads SGG. Lysine 395 carries the post-translational modification N6,N6,N6-trimethyllysine.

This sequence belongs to the class I fructose-bisphosphate aldolase family. Homotetramer. Can be trimethylated at Lys-395 by LSMT-L, but the trimethylation has no effect in vitro on the kinetic properties of the enzyme. Post-translationally, S-glutathionylated. As to expression, highly expressed in rosettes leaves and cauline leaves.

The protein resides in the plastid. Its subcellular location is the chloroplast. It is found in the plastoglobule. It localises to the chloroplast stroma. It catalyses the reaction beta-D-fructose 1,6-bisphosphate = D-glyceraldehyde 3-phosphate + dihydroxyacetone phosphate. It functions in the pathway carbohydrate degradation; glycolysis; D-glyceraldehyde 3-phosphate and glycerone phosphate from D-glucose: step 4/4. Plays a key role in glycolysis and gluconeogenesis. The chain is Fructose-bisphosphate aldolase 1, chloroplastic from Arabidopsis thaliana (Mouse-ear cress).